Here is a 225-residue protein sequence, read N- to C-terminus: UPF0758 protein SO_4248 (225 aa).

One can recognise an MPN domain in the interval 102 to 224 (VLTNPDLTRD…IVSFAERGWI (123 aa)). Residues His-173, His-175, and Asp-186 each contribute to the Zn(2+) site. The JAMM motif motif lies at 173–186 (HNHPSGIAEPSQAD).

It belongs to the UPF0758 family.

The polypeptide is UPF0758 protein SO_4248 (Shewanella oneidensis (strain ATCC 700550 / JCM 31522 / CIP 106686 / LMG 19005 / NCIMB 14063 / MR-1)).